The primary structure comprises 155 residues: MSQVILDLQLACEDNSGLPEESQFQTWLNAVIPQFQEESEVTILVVDTAESHSLNLTYRGKDKPTNVLSFPFEVPPGMEMSLLGDLVICRQVVEKEAQEQGKPLEAHWAHMVVHGSLHLLGYDHIEDDEAEEMEALETEIMLALGYEDPYIAEKE.

Residues His114, His118, and His124 each coordinate Zn(2+).

It belongs to the endoribonuclease YbeY family. It depends on Zn(2+) as a cofactor.

It is found in the cytoplasm. Functionally, single strand-specific metallo-endoribonuclease involved in late-stage 70S ribosome quality control and in maturation of the 3' terminus of the 16S rRNA. This chain is Endoribonuclease YbeY, found in Shigella dysenteriae serotype 1 (strain Sd197).